The following is a 198-amino-acid chain: CASP-like protein 4B3 (198 aa).

A disordered region spans residues 1-27; sequence MSSSGPPAGDGRDDASGPGPAGAAAAA. Over 1 to 51 the chain is Cytoplasmic; it reads MSSSGPPAGDGRDDASGPGPAGAAAAADGSVPVSRSIVERWKMEPAAARAR. The segment covering 16 to 27 has biased composition (low complexity); it reads SGPGPAGAAAAA. Residues 52-72 traverse the membrane as a helical segment; that stretch reads LLLRAVAWLFSLLALVVMASN. Residues 73–85 lie on the Extracellular side of the membrane; that stretch reads KHGHGGAQDFDNY. The helical transmembrane segment at 86–106 threads the bilayer; that stretch reads PEYTYCLGISIIAVLYTTAQV. Topologically, residues 107–124 are cytoplasmic; the sequence is TRDVHRLSWGRDVIAGRK. Residues 125-145 traverse the membrane as a helical segment; sequence AAAVVDFAGDQVVAYLLMSAL. At 146 to 166 the chain is on the extracellular side; it reads SAAAPVTDYMRQAADNLFTDS. The chain crosses the membrane as a helical span at residues 167 to 187; that stretch reads AAAAISMAFLAFLAAGLSALV. Over 188–198 the chain is Cytoplasmic; sequence SGYNLAMEVLV.

Belongs to the Casparian strip membrane proteins (CASP) family. Homodimer and heterodimers.

It localises to the cell membrane. The polypeptide is CASP-like protein 4B3 (Oryza sativa subsp. japonica (Rice)).